Here is a 689-residue protein sequence, read N- to C-terminus: Methionine--tRNA ligase (689 aa).

The short motif at 16–26 is the 'HIGH' region element; it reads PYANAGLHLGH. Zn(2+) contacts are provided by Cys147, Cys150, Cys160, and Cys163. Residues 342–346 carry the 'KMSKS' region motif; that stretch reads KMSKS. Lys345 is a binding site for ATP. In terms of domain architecture, tRNA-binding spans 585 to 689; it reads DFAKVDLRVG…AGVKPGMRVG (105 aa).

This sequence belongs to the class-I aminoacyl-tRNA synthetase family. MetG type 1 subfamily. Homodimer. It depends on Zn(2+) as a cofactor.

The protein localises to the cytoplasm. The catalysed reaction is tRNA(Met) + L-methionine + ATP = L-methionyl-tRNA(Met) + AMP + diphosphate. Its function is as follows. Is required not only for elongation of protein synthesis but also for the initiation of all mRNA translation through initiator tRNA(fMet) aminoacylation. The chain is Methionine--tRNA ligase from Chromobacterium violaceum (strain ATCC 12472 / DSM 30191 / JCM 1249 / CCUG 213 / NBRC 12614 / NCIMB 9131 / NCTC 9757 / MK).